We begin with the raw amino-acid sequence, 497 residues long: Glycerol kinase (497 aa).

Thr12 provides a ligand contact to ADP. The ATP site is built by Thr12, Thr13, and Ser14. Thr12 provides a ligand contact to sn-glycerol 3-phosphate. Residue Arg16 participates in ADP binding. Residues Arg82, Glu83, Tyr134, and Asp243 each contribute to the sn-glycerol 3-phosphate site. Glycerol is bound by residues Arg82, Glu83, Tyr134, Asp243, and Gln244. ADP is bound by residues Thr265 and Gly308. 4 residues coordinate ATP: Thr265, Gly308, Gln312, and Gly411. Gly411 provides a ligand contact to ADP.

This sequence belongs to the FGGY kinase family.

It catalyses the reaction glycerol + ATP = sn-glycerol 3-phosphate + ADP + H(+). Its pathway is polyol metabolism; glycerol degradation via glycerol kinase pathway; sn-glycerol 3-phosphate from glycerol: step 1/1. Inhibited by fructose 1,6-bisphosphate (FBP). Functionally, key enzyme in the regulation of glycerol uptake and metabolism. Catalyzes the phosphorylation of glycerol to yield sn-glycerol 3-phosphate. The protein is Glycerol kinase of Rhizobium meliloti (strain 1021) (Ensifer meliloti).